A 297-amino-acid chain; its full sequence is Bifunctional protein FolD (297 aa).

NADP(+) is bound by residues glycine 166–serine 168, serine 191, and isoleucine 232.

The protein belongs to the tetrahydrofolate dehydrogenase/cyclohydrolase family. In terms of assembly, homodimer.

The catalysed reaction is (6R)-5,10-methylene-5,6,7,8-tetrahydrofolate + NADP(+) = (6R)-5,10-methenyltetrahydrofolate + NADPH. The enzyme catalyses (6R)-5,10-methenyltetrahydrofolate + H2O = (6R)-10-formyltetrahydrofolate + H(+). The protein operates within one-carbon metabolism; tetrahydrofolate interconversion. Functionally, catalyzes the oxidation of 5,10-methylenetetrahydrofolate to 5,10-methenyltetrahydrofolate and then the hydrolysis of 5,10-methenyltetrahydrofolate to 10-formyltetrahydrofolate. The sequence is that of Bifunctional protein FolD from Phenylobacterium zucineum (strain HLK1).